Consider the following 930-residue polypeptide: Protein translocase subunit SecA (930 aa).

ATP contacts are provided by residues glutamine 87, 105-109 (GEGKT), and aspartate 516. Zn(2+) is bound by residues cysteine 914, cysteine 916, cysteine 925, and histidine 926.

This sequence belongs to the SecA family. As to quaternary structure, monomer and homodimer. Part of the essential Sec protein translocation apparatus which comprises SecA, SecYEG and auxiliary proteins SecDF-YajC and YidC. Zn(2+) serves as cofactor.

The protein resides in the cell inner membrane. It is found in the cytoplasm. The catalysed reaction is ATP + H2O + cellular proteinSide 1 = ADP + phosphate + cellular proteinSide 2.. Its function is as follows. Part of the Sec protein translocase complex. Interacts with the SecYEG preprotein conducting channel. Has a central role in coupling the hydrolysis of ATP to the transfer of proteins into and across the cell membrane, serving both as a receptor for the preprotein-SecB complex and as an ATP-driven molecular motor driving the stepwise translocation of polypeptide chains across the membrane. The protein is Protein translocase subunit SecA of Variovorax paradoxus (strain S110).